The chain runs to 1005 residues: Beta-galactosidase (1005 aa).

Residue Glu-455 is the Proton donor of the active site. The Nucleophile role is filled by Glu-526.

The protein belongs to the glycosyl hydrolase 2 family.

The enzyme catalyses Hydrolysis of terminal non-reducing beta-D-galactose residues in beta-D-galactosides.. In Actinobacillus pleuropneumoniae (Haemophilus pleuropneumoniae), this protein is Beta-galactosidase (lacZ).